The following is a 338-amino-acid chain: Probable beta-1,4-xylosyltransferase IRX9 (338 aa).

The interval 1 to 21 is disordered; sequence MASAGGCKKKTGNSRSRSPRS. Topologically, residues 1–27 are cytoplasmic; it reads MASAGGCKKKTGNSRSRSPRSPVVLRR. The helical; Signal-anchor for type II membrane protein transmembrane segment at 28–46 threads the bilayer; the sequence is AMLHSSLCFLVGLLAGLAA. Residues 47 to 338 are Lumenal-facing; that stretch reads PSDWPAAAGA…IMLWRIQTTL (292 aa). N-linked (GlcNAc...) asparagine glycans are attached at residues Asn232 and Asn314.

Belongs to the glycosyltransferase 43 family.

It localises to the golgi apparatus membrane. Functionally, probable beta-1,4-xylosyltransferase involved in xylan biosynthesis in cell walls. This is Probable beta-1,4-xylosyltransferase IRX9 from Oryza sativa subsp. japonica (Rice).